We begin with the raw amino-acid sequence, 345 residues long: L-threonine 3-dehydrogenase (345 aa).

Cys-39 contributes to the Zn(2+) binding site. Residues Thr-41 and His-44 each act as charge relay system in the active site. Zn(2+)-binding residues include His-64, Glu-65, Cys-94, Cys-97, Cys-100, and Cys-108. NAD(+) contacts are provided by residues Ile-176, Asp-196, Arg-201, 263 to 265 (LGI), and 287 to 288 (VY).

This sequence belongs to the zinc-containing alcohol dehydrogenase family. In terms of assembly, homotetramer. Zn(2+) serves as cofactor.

It localises to the cytoplasm. The catalysed reaction is L-threonine + NAD(+) = (2S)-2-amino-3-oxobutanoate + NADH + H(+). Its pathway is amino-acid degradation; L-threonine degradation via oxydo-reductase pathway; glycine from L-threonine: step 1/2. Functionally, catalyzes the NAD(+)-dependent oxidation of L-threonine to 2-amino-3-ketobutyrate. The chain is L-threonine 3-dehydrogenase from Anaeromyxobacter sp. (strain K).